The following is a 198-amino-acid chain: Putative manganese efflux pump MntP (198 aa).

6 consecutive transmembrane segments (helical) span residues 3 to 23 (SIEL…VAIC), 37 to 57 (VLTG…GYLL), 65 to 85 (ITSI…INMI), 105 to 127 (SLTV…FAFL), 131 to 153 (IIPA…VKIG), and 171 to 191 (ILIG…SFVF).

It belongs to the MntP (TC 9.B.29) family.

It localises to the cell membrane. Functionally, probably functions as a manganese efflux pump. The polypeptide is Putative manganese efflux pump MntP (Acetivibrio thermocellus (strain ATCC 27405 / DSM 1237 / JCM 9322 / NBRC 103400 / NCIMB 10682 / NRRL B-4536 / VPI 7372) (Clostridium thermocellum)).